The primary structure comprises 609 residues: Albumin (609 aa).

The N-terminal stretch at 1 to 18 (MKWVTFISLLFLFSSAYS) is a signal peptide. Residues 19 to 24 (RGVFRR) constitute a propeptide that is removed on maturation. Albumin domains follow at residues 19 to 210 (RGVF…DELR), 211 to 403 (DEGK…EFKP), and 404 to 601 (LVEE…KLVA). Residue His-27 participates in Cu cation binding. Residue Ser-29 is modified to Phosphoserine; by FAM20C. A Ca(2+)-binding site is contributed by Glu-30. A glycan (N-linked (Glc) (glycation) lysine) is linked at Lys-36. Residue Asp-37 coordinates Ca(2+). Lys-75 is a glycosylation site (N-linked (Glc) (glycation) lysine; in vitro). A disulfide bridge connects residues Cys-77 and Cys-86. Phosphoserine; by FAM20C occurs at positions 82 and 89. Position 91 (His-91) interacts with Zn(2+). 4 disulfides stabilise this stretch: Cys-99/Cys-115, Cys-114/Cys-125, Cys-148/Cys-193, and Cys-192/Cys-201. Position 107 is a phosphothreonine; by FAM20C (Thr-107). N-linked (Glc) (glycation) lysine; in vitro glycosylation is found at Lys-161 and Lys-186. The N-linked (Glc) (glycation) lysine; in vitro glycan is linked to Lys-223. Cystine bridges form between Cys-224/Cys-270 and Cys-269/Cys-277. Lys-229 bears the N6-succinyllysine mark. Residue Lys-249 is glycosylated (N-linked (Glc) (glycation) lysine; in vitro). Residue Lys-257 is glycosylated (N-linked (Glc) (glycation) lysine). Lys-264 is a (4Z,15Z)-bilirubin IXalpha binding site. Residue Glu-268 coordinates Ca(2+). The Zn(2+) site is built by His-271 and Asp-273. Asp-273, Glu-276, Asp-279, and Asp-283 together coordinate Ca(2+). Intrachain disulfides connect Cys-289–Cys-303 and Cys-302–Cys-313. Position 297 is a phosphoserine (Ser-297). Lys-300 carries an N-linked (Glc) (glycation) lysine; in vitro glycan. Residue Lys-305 is glycosylated (N-linked (Glc) (glycation) lysine). A glycan (N-linked (Glc) (glycation) lysine; in vitro) is linked at Lys-337. Disulfide bonds link Cys-340-Cys-385 and Cys-384-Cys-393. Lys-341 carries an N-linked (Glc) (glycation) lysine glycan. The N-linked (GlcNAc...) asparagine; in variant Redhill glycan is linked to Asn-342. Lys-347 is a glycosylation site (N-linked (Glc) (glycation) lysine; in vitro). A glycan (N-linked (Glc) (glycation) lysine) is linked at Lys-375. N-linked (Glc) (glycation) lysine; in vitro glycans are attached at residues Lys-402 and Lys-437. Cystine bridges form between Cys-416–Cys-462, Cys-461–Cys-472, Cys-485–Cys-501, and Cys-500–Cys-511. Ser-443 is subject to Phosphoserine. Thr-444 and Thr-446 each carry phosphothreonine. Lys-460 bears the N6-succinyllysine mark. A glycan (N-linked (Glc) (glycation) lysine) is linked at Lys-463. Lys-468 carries an N-linked (Glc) (glycation) lysine; in vitro glycan. Phosphoserine is present on Ser-513. An N-linked (GlcNAc...) asparagine; in variant Casebrook glycan is attached at Asp-518. 2 disulfides stabilise this stretch: Cys-538–Cys-583 and Cys-582–Cys-591. At Lys-543 the chain carries N6-succinyllysine. N-linked (Glc) (glycation) lysine glycosylation is present at Lys-549. An N6-methyllysine; alternate modification is found at Lys-558. N-linked (Glc) (glycation) lysine; alternate glycosylation occurs at Lys-558. 2 N-linked (Glc) (glycation) lysine; in vitro glycosylation sites follow: Lys-560 and Lys-569. Lys-588 bears the N6-succinyllysine mark. An N-linked (Glc) (glycation) lysine; in vitro glycan is attached at Lys-597.

Belongs to the ALB/AFP/VDB family. In terms of assembly, interacts with FCGRT; this interaction regulates ALB homeostasis. Interacts with TASOR. In plasma, occurs in a covalently-linked complex with chromophore-bound alpha-1-microglobulin with molar ratio 1:2 and 1:1; this interaction does not prevent fatty acid binding to ALB. In terms of processing, kenitra variant is partially O-glycosylated at Thr-620. It has two new disulfide bonds Cys-600 to Cys-602 and Cys-601 to Cys-606. Post-translationally, glycated in diabetic patients. Phosphorylated by FAM20C in the extracellular medium. In terms of processing, acetylated on Lys-223 by acetylsalicylic acid. In terms of tissue distribution, plasma.

The protein localises to the secreted. Binds water, Ca(2+), Na(+), K(+), fatty acids, hormones, bilirubin and drugs. Its main function is the regulation of the colloidal osmotic pressure of blood. Major zinc transporter in plasma, typically binds about 80% of all plasma zinc. Major calcium and magnesium transporter in plasma, binds approximately 45% of circulating calcium and magnesium in plasma. Potentially has more than two calcium-binding sites and might additionally bind calcium in a non-specific manner. The shared binding site between zinc and calcium at residue Asp-273 suggests a crosstalk between zinc and calcium transport in the blood. The rank order of affinity is zinc &gt; calcium &gt; magnesium. Binds to the bacterial siderophore enterobactin and inhibits enterobactin-mediated iron uptake of E.coli from ferric transferrin, and may thereby limit the utilization of iron and growth of enteric bacteria such as E.coli. Does not prevent iron uptake by the bacterial siderophore aerobactin. This is Albumin (ALB) from Homo sapiens (Human).